Consider the following 345-residue polypeptide: Guanine nucleotide-binding protein alpha-4 subunit (345 aa).

The 316-residue stretch at 30-345 folds into the G-alpha domain; sequence KDVKLLLLGP…TILSQALEHF (316 aa). The interval 33 to 46 is G1 motif; it reads KLLLLGPGESGKST. GTP is bound by residues 38 to 45, 171 to 177, 196 to 200, 265 to 268, and A320; these read GPGESGKS, LRCRVRT, DVGGQ, and NKKD. Positions 45 and 177 each coordinate Mg(2+). The segment at 169-177 is G2 motif; sequence DVLRCRVRT. Positions 192–201 are G3 motif; the sequence is LKIVDVGGQR. The G4 motif stretch occupies residues 261-268; that stretch reads VLFLNKKD. The tract at residues 318 to 323 is G5 motif; sequence TCAVDT.

Belongs to the G-alpha family. G proteins are composed of 3 units; alpha, beta and gamma. The alpha chain contains the guanine nucleotide binding site.

In terms of biological role, guanine nucleotide-binding proteins (G proteins) are involved as modulators or transducers in various transmembrane signaling systems. G alpha-4 plays a role in morphogenesis of the multicellular structure. In Dictyostelium discoideum (Social amoeba), this protein is Guanine nucleotide-binding protein alpha-4 subunit (gpaD).